Here is a 490-residue protein sequence, read N- to C-terminus: GTPase Der (490 aa).

EngA-type G domains lie at 1–165 (MRIA…QIPV) and 227–400 (LKVA…TIAT). GTP contacts are provided by residues 7-14 (GRPNVGKS), 54-58 (DTGGV), 117-120 (NKAD), 233-240 (GHPNVGKS), 280-284 (DTAGL), and 345-348 (NKWD). Residues 401–485 (TKLSTSLVNK…PFDLEYKAKP (85 aa)) form the KH-like domain.

Belongs to the TRAFAC class TrmE-Era-EngA-EngB-Septin-like GTPase superfamily. EngA (Der) GTPase family. As to quaternary structure, associates with the 50S ribosomal subunit.

In terms of biological role, GTPase that plays an essential role in the late steps of ribosome biogenesis. This Chlamydia trachomatis serovar A (strain ATCC VR-571B / DSM 19440 / HAR-13) protein is GTPase Der.